The primary structure comprises 406 residues: Tryptophan synthase beta chain (406 aa).

Lys99 is modified (N6-(pyridoxal phosphate)lysine).

It belongs to the TrpB family. In terms of assembly, tetramer of two alpha and two beta chains. The cofactor is pyridoxal 5'-phosphate.

It carries out the reaction (1S,2R)-1-C-(indol-3-yl)glycerol 3-phosphate + L-serine = D-glyceraldehyde 3-phosphate + L-tryptophan + H2O. It functions in the pathway amino-acid biosynthesis; L-tryptophan biosynthesis; L-tryptophan from chorismate: step 5/5. The beta subunit is responsible for the synthesis of L-tryptophan from indole and L-serine. Essential for production of nod factors and establishment of symbiosis. The protein is Tryptophan synthase beta chain of Rhizobium etli (strain ATCC 51251 / DSM 11541 / JCM 21823 / NBRC 15573 / CFN 42).